A 1129-amino-acid chain; its full sequence is Phytochrome A type 3 (1129 aa).

The segment covering 1–21 (MSSSRPASSSSSRNRQSSQAR) has biased composition (low complexity). The tract at residues 1-24 (MSSSRPASSSSSRNRQSSQARVLA) is disordered. A GAF domain is found at 217–402 (SMEVLCNTVV…VFAVHVNREF (186 aa)). C322 lines the phytochromobilin pocket. PAS domains are found at residues 618–688 (VTSE…LQGK) and 748–822 (VEGD…VSLC). The Histidine kinase domain occupies 902 to 1122 (YMRHAINNPL…TFIITAELAS (221 aa)).

The protein belongs to the phytochrome family. As to quaternary structure, homodimer. Post-translationally, contains one covalently linked phytochromobilin chromophore.

Functionally, regulatory photoreceptor which exists in two forms that are reversibly interconvertible by light: the Pr form that absorbs maximally in the red region of the spectrum and the Pfr form that absorbs maximally in the far-red region. Photoconversion of Pr to Pfr induces an array of morphogenic responses, whereas reconversion of Pfr to Pr cancels the induction of those responses. Pfr controls the expression of a number of nuclear genes including those encoding the small subunit of ribulose-bisphosphate carboxylase, chlorophyll A/B binding protein, protochlorophyllide reductase, rRNA, etc. It also controls the expression of its own gene(s) in a negative feedback fashion. The protein is Phytochrome A type 3 (PHYA3) of Avena sativa (Oat).